Here is a 396-residue protein sequence, read N- to C-terminus: 4-hydroxy-3-methylbut-2-en-1-yl diphosphate synthase (ferredoxin) (396 aa).

4 residues coordinate [4Fe-4S] cluster: C305, C308, C339, and E346.

It belongs to the IspG family. Requires [4Fe-4S] cluster as cofactor.

The enzyme catalyses (2E)-4-hydroxy-3-methylbut-2-enyl diphosphate + 2 oxidized [2Fe-2S]-[ferredoxin] + H2O = 2-C-methyl-D-erythritol 2,4-cyclic diphosphate + 2 reduced [2Fe-2S]-[ferredoxin] + H(+). Its pathway is isoprenoid biosynthesis; isopentenyl diphosphate biosynthesis via DXP pathway; isopentenyl diphosphate from 1-deoxy-D-xylulose 5-phosphate: step 5/6. Converts 2C-methyl-D-erythritol 2,4-cyclodiphosphate (ME-2,4cPP) into 1-hydroxy-2-methyl-2-(E)-butenyl 4-diphosphate. The polypeptide is 4-hydroxy-3-methylbut-2-en-1-yl diphosphate synthase (ferredoxin) (Gloeobacter violaceus (strain ATCC 29082 / PCC 7421)).